Here is a 103-residue protein sequence, read N- to C-terminus: Nucleoid-associated protein NIS_0256 (103 aa).

This sequence belongs to the YbaB/EbfC family. In terms of assembly, homodimer.

It localises to the cytoplasm. The protein localises to the nucleoid. Binds to DNA and alters its conformation. May be involved in regulation of gene expression, nucleoid organization and DNA protection. The polypeptide is Nucleoid-associated protein NIS_0256 (Nitratiruptor sp. (strain SB155-2)).